The primary structure comprises 492 residues: Cell death protein 6 (492 aa).

Residues 19–29 show a composition bias toward low complexity; sequence GNNINGEGSSS. Residues 19 to 38 are disordered; that stretch reads GNNINGEGSSSPSTSAPQVK. The PID domain occupies 55-215; the sequence is INGHVEYVAR…YILKKKIVEL (161 aa). Disordered regions lie at residues 241 to 385 and 464 to 492; these read TGPP…STAA and TGDLGGIEGESDYGTPSDRLNPKMMNLKQ. Residues 244–268 are compositionally biased toward pro residues; that stretch reads PIYPGLGPPALPLSPMPQGPPPNIP. Residues 300–312 show a composition bias toward low complexity; the sequence is ASPSVSPASTSPS. The segment covering 313–333 has biased composition (pro residues); the sequence is GPAPSIPPPRPPALAPPPPVA. Residues 373–383 are compositionally biased toward basic and acidic residues; sequence FDPRAGEKKST.

Belongs to the ced-6 family. In terms of assembly, homodimer. Interacts with ced-1. Interacts with E3 ubiquitin-protein ligase trim-21. As to expression, detected in gonadal sheath cells.

It is found in the cytoplasm. Functionally, may function as an adapter protein in a pathway that mediates recognition and phagocytosis of apoptotic cells during normal development. Promotes engulfment of cells at both early and late stages of apoptosis. Required for actin reorganization around apoptotic cells. Plays a role in protecting dopaminergic neurons from oxidative stress-induced degeneration. Mediates recruitment of E3 ubiquitin-protein ligase trim-21 to the apoptotic cell surface which promotes ubiquitination and degradation of ced-1. The protein is Cell death protein 6 of Caenorhabditis elegans.